The following is a 451-amino-acid chain: 12S seed storage protein CRD (451 aa).

The signal sequence occupies residues 1-25 (MHKLLFSLLSVVSLSFLLFFHGAEA). Cystine bridges form between C36–C69 and C112–C277. At S39 the chain carries Phosphoserine. Cupin type-1 domains follow at residues 42–234 (NSLA…ETAK) and 283–432 (ENID…EEAK). T115 is modified (phosphothreonine). S302 is modified (phosphoserine). Position 396 is a phosphothreonine (T396). Position 437 is a phosphoserine (S437).

This sequence belongs to the 11S seed storage protein (globulins) family. In terms of assembly, hexamer; each subunit is composed of an acidic and a basic chain derived from a single precursor and linked by a disulfide bond. In terms of processing, ubiquitinated. Proteolytically processed during seed maturation at a conserved Asn-Gly peptide bond by an asparaginyl endopeptidase to produce two mature polypeptides referred to as alpha and beta subunits that are joined together by a disulfide bond. Post-translationally, phosphorylated in seeds on some Tyr residues in response to abscisic acid (ABA). As to expression, accumulates in seeds 8 days after anthesis.

The protein resides in the protein storage vacuole. Its function is as follows. Seed storage protein. This Arabidopsis thaliana (Mouse-ear cress) protein is 12S seed storage protein CRD (CRD).